The sequence spans 228 residues: E3 ubiquitin-protein ligase RNF114 (228 aa).

The segment at 29–68 (CPVCLEVYEKPVQVPCGHVFCSACLQECLKPKKPVCGVCR) adopts an RING-type zinc-finger fold. Residues Cys-91 and Cys-94 each coordinate Zn(2+). A C2HC RNF-type zinc finger spans residues 91-110 (CHGCRKNFFLSKIRAHVATC). Lys-102 bears the N6-acetyllysine mark. Zn(2+) is bound by residues His-106 and Cys-110. Lys-112 carries the N6-acetyllysine modification.

Interacts with XAF1, the interaction increases XAF1 stability and proapoptotic effects, and may regulate IFN signaling. In terms of processing, autoubiquitinated. Polyubiquitinated in the presence of E2 enzymes UBE2D1, UBE2D2 and UBE2D3, but only monoubiquitinated in the presence of UBE2E1.

The protein resides in the cytoplasm. Its subcellular location is the nucleus. It catalyses the reaction S-ubiquitinyl-[E2 ubiquitin-conjugating enzyme]-L-cysteine + [acceptor protein]-L-lysine = [E2 ubiquitin-conjugating enzyme]-L-cysteine + N(6)-ubiquitinyl-[acceptor protein]-L-lysine.. Its pathway is protein modification; protein ubiquitination. E3 ubiquitin-protein ligase that promotes the ubiquitination of various substrates. In turn, participates in the regulation of many biological processes including cell cycle, apoptosis, osteoclastogenesis as well as innate or adaptive immunity. Acts as negative regulator of NF-kappa-B-dependent transcription by promoting the ubiquitination and stabilization of the NF-kappa-B inhibitor TNFAIP3. May promote the ubiquitination of TRAF6 as well. Also acts as a negative regulator of T-cell activation. Inhibits cellular dsRNA responses and interferon production by targeting MAVS component for proteasomal degradation. Ubiquitinates the CDK inhibitor CDKN1A leading to its degradationand probably also CDKN1B and CDKN1C. This activity stimulates cell cycle G1-to-S phase transition and suppresses cellular senescence. May play a role in spermatogenesis. Inhibits classical swine fever virus replication by mediating 'K27'-linked ubiquitination of viral NS4B and inducing its degradation via the proteasome. The protein is E3 ubiquitin-protein ligase RNF114 (RNF114) of Sus scrofa (Pig).